We begin with the raw amino-acid sequence, 312 residues long: Aspartate carbamoyltransferase catalytic subunit (312 aa).

Carbamoyl phosphate contacts are provided by Arg58 and Thr59. Lys86 serves as a coordination point for L-aspartate. Carbamoyl phosphate is bound by residues Arg108, His136, and Gln139. Residues Arg169 and Arg223 each contribute to the L-aspartate site. 2 residues coordinate carbamoyl phosphate: Gly264 and Pro265.

The protein belongs to the aspartate/ornithine carbamoyltransferase superfamily. ATCase family. Heterododecamer (2C3:3R2) of six catalytic PyrB chains organized as two trimers (C3), and six regulatory PyrI chains organized as three dimers (R2).

The enzyme catalyses carbamoyl phosphate + L-aspartate = N-carbamoyl-L-aspartate + phosphate + H(+). It functions in the pathway pyrimidine metabolism; UMP biosynthesis via de novo pathway; (S)-dihydroorotate from bicarbonate: step 2/3. Catalyzes the condensation of carbamoyl phosphate and aspartate to form carbamoyl aspartate and inorganic phosphate, the committed step in the de novo pyrimidine nucleotide biosynthesis pathway. The protein is Aspartate carbamoyltransferase catalytic subunit of Syntrophomonas wolfei subsp. wolfei (strain DSM 2245B / Goettingen).